Here is a 43-residue protein sequence, read N- to C-terminus: B melanoma antigen 1 (43 aa).

Residues methionine 1–alanine 17 form the signal peptide.

Belongs to the BAGE family. In terms of tissue distribution, not expressed in normal tissues, except in testis. Expressed with significant proportion in melanomas, but also in tumors of various histological origins, such as bladder carcinomas, head and neck squamous cell carcinomas, lung and breast carcinomas. Not expressed in renal, colorectal and prostatic carcinomas, leukemias and lymphomas. More frequently expressed in metastatic melanomas than in primary melanomas.

The protein localises to the secreted. In terms of biological role, unknown. Antigen recognized on a melanoma by autologous cytolytic T-lymphocytes. The protein is B melanoma antigen 1 (BAGE) of Homo sapiens (Human).